The following is a 2190-amino-acid chain: Highly-reducing polyketide synthase 1 (2190 aa).

Positions 6-431 (LTPVAIVGYA…GANAHVVLGA (426 aa)) constitute a Ketosynthase family 3 (KS3) domain. Residues C179, H315, and H355 each act as for beta-ketoacyl synthase activity in the active site. Residues 541-857 (FVFTGQGAQW…VSVLARGQNA (317 aa)) form the Malonyl-CoA:ACP transacylase (MAT) domain. Residues 925–1061 (NDLLGSLADW…GLVGVRNSPA (137 aa)) are N-terminal hotdog fold. Residues 925-1246 (NDLLGSLADW…MTPLRESSGS (322 aa)) form the PKS/mFAS DH domain. The active-site Proton acceptor; for dehydratase activity is H957. The segment at 1089–1246 (TETVDVQAMY…MTPLRESSGS (158 aa)) is C-terminal hotdog fold. Catalysis depends on D1154, which acts as the Proton donor; for dehydratase activity. In terms of domain architecture, Enoyl reductase (ER) spans 1494-1804 (GSLDSFYFVD…SGKSMGKLVI (311 aa)). The 178-residue stretch at 1828-2005 (ASYLIVGGTG…GTSLDLTAVS (178 aa)) folds into the Ketoreductase (KR) domain. In terms of domain architecture, Carrier spans 2107–2184 (KALEVLYGAL…ELAKLISKKS (78 aa)). Position 2144 is an O-(pantetheine 4'-phosphoryl)serine (S2144).

The cofactor is pantetheine 4'-phosphate.

In terms of biological role, highly-reducing polyketide synthase; part of the gene cluster that mediates the biosynthesis of liamocins, glycolipids (also called heavy oils) composed of a single mannitol or arabitol headgroup linked to either three, four or even six 3,5-dihydroxydecanoic ester tail-groups. Within the pathway, PKS1 is responsible for biosynthesis of 3,5-dihydroxydecanoic acid from acetyl-CoA and malonyl-CoA. A phosphopantetheine transferase (PPTase) activates the HR-PKS. The esterase EST1 then catalyzes ester bond formation between 3,5-dihydroxydecanoic acid and mannitol (provided by the mannitol-1-phosphate 5-dehydrogenase and the NADP-dependent mannitol dehydrogenase) or arabinol (provided by the L-arabinitol 4-dehydrogenase). The chain is Highly-reducing polyketide synthase 1 from Aureobasidium melanogenum (Aureobasidium pullulans var. melanogenum).